We begin with the raw amino-acid sequence, 542 residues long: Probable protein kinase UbiB (542 aa).

The Protein kinase domain occupies 123–505 (DFDEQALASA…ADNKTYNVKM (383 aa)). Residues 129–137 (LASASIAQV) and Lys-156 each bind ATP. Catalysis depends on Asp-291, which acts as the Proton acceptor. A helical membrane pass occupies residues 506-526 (IIMGSIILSLLWQFNSLPLWL).

It belongs to the ABC1 family. UbiB subfamily.

It localises to the cell inner membrane. Its pathway is cofactor biosynthesis; ubiquinone biosynthesis [regulation]. In terms of biological role, is probably a protein kinase regulator of UbiI activity which is involved in aerobic coenzyme Q (ubiquinone) biosynthesis. The protein is Probable protein kinase UbiB of Haemophilus ducreyi (strain 35000HP / ATCC 700724).